The chain runs to 494 residues: Rho GTPase-activating protein 19 (494 aa).

An N-acetylalanine modification is found at Ala-2. Residues Ser-7 and Ser-31 each carry the phosphoserine modification. In terms of domain architecture, Rho-GAP spans 102–308; the sequence is MSLKRKEKGV…FMIKHSQKLF (207 aa). Disordered stretches follow at residues 349-368 and 399-421; these read KSQKRNRVDSCPHQEETQHH and QSLTQTPGREPSTSQVQKRARSR. Positions 354–368 are enriched in basic and acidic residues; sequence NRVDSCPHQEETQHH. Positions 399-415 are enriched in polar residues; that stretch reads QSLTQTPGREPSTSQVQ. 3 positions are modified to phosphoserine: Ser-422, Ser-438, and Ser-470. Thr-478 is modified (phosphothreonine).

In terms of tissue distribution, strong expression in fetal heart, brain, placenta, lung, liver, skeletal muscle, kidney and pancreas. Weak expression in adult pancreas, spleen, thymus, and ovary.

It localises to the nucleus. GTPase activator for the Rho-type GTPases by converting them to an inactive GDP-bound state. This Homo sapiens (Human) protein is Rho GTPase-activating protein 19 (ARHGAP19).